The primary structure comprises 785 residues: Cadherin-7 (785 aa).

Positions 1 to 27 (MKLGKVEFCHFLQLIALFLCFSGMSQA) are cleaved as a signal peptide. Positions 28–47 (ELSRSRSKPYFQSGRSRTKR) are excised as a propeptide. Topologically, residues 28-607 (ELSRSRSKPY…AYVLPAGLST (580 aa)) are extracellular. Cadherin domains lie at 49-153 (WVWN…EPKF), 154-262 (LDGP…PPRF), 263-377 (PRRS…PPVF), 378-482 (SSPL…APEF), and 482-599 (FAMD…AEAY). N-linked (GlcNAc...) asparagine glycans are attached at residues N449 and N530. The chain crosses the membrane as a helical span at residues 608–628 (GALIAILACVLTLLVLILLIV). Residues 629–785 (TMRRRKKEPL…YGTGQESLYS (157 aa)) lie on the Cytoplasmic side of the membrane.

It is found in the cell membrane. Its function is as follows. Cadherins are calcium-dependent cell adhesion proteins. They preferentially interact with themselves in a homophilic manner in connecting cells; cadherins may thus contribute to the sorting of heterogeneous cell types. This chain is Cadherin-7 (CDH7), found in Homo sapiens (Human).